A 1396-amino-acid polypeptide reads, in one-letter code: DNA-directed RNA polymerase subunit beta' (1396 aa).

The Zn(2+) site is built by C73, C75, C88, and C91. Residues D467, D469, and D471 each coordinate Mg(2+). Zn(2+)-binding residues include C817, C891, C898, and C901.

It belongs to the RNA polymerase beta' chain family. In terms of assembly, the RNAP catalytic core consists of 2 alpha, 1 beta, 1 beta' and 1 omega subunit. When a sigma factor is associated with the core the holoenzyme is formed, which can initiate transcription. Requires Mg(2+) as cofactor. Zn(2+) serves as cofactor.

The enzyme catalyses RNA(n) + a ribonucleoside 5'-triphosphate = RNA(n+1) + diphosphate. DNA-dependent RNA polymerase catalyzes the transcription of DNA into RNA using the four ribonucleoside triphosphates as substrates. The chain is DNA-directed RNA polymerase subunit beta' from Orientia tsutsugamushi (strain Ikeda) (Rickettsia tsutsugamushi).